A 311-amino-acid polypeptide reads, in one-letter code: UDP-N-acetylenolpyruvoylglucosamine reductase (311 aa).

The region spanning 34–198 (MGGAADLFIT…LEGTFRLQKG (165 aa)) is the FAD-binding PCMH-type domain. The active site involves Arg-177. The Proton donor role is filled by Ser-227. The active site involves Glu-297.

Belongs to the MurB family. FAD serves as cofactor.

The protein localises to the cytoplasm. It catalyses the reaction UDP-N-acetyl-alpha-D-muramate + NADP(+) = UDP-N-acetyl-3-O-(1-carboxyvinyl)-alpha-D-glucosamine + NADPH + H(+). It participates in cell wall biogenesis; peptidoglycan biosynthesis. In terms of biological role, cell wall formation. The protein is UDP-N-acetylenolpyruvoylglucosamine reductase of Shouchella clausii (strain KSM-K16) (Alkalihalobacillus clausii).